The chain runs to 130 residues: Protein lgg-2 (130 aa).

Gly130 is lipidated: Phosphatidylethanolamine amidated glycine.

Belongs to the ATG8 family. May interact with vps-39. Interacts with lgg-3; the interaction is direct. Interacts with atg-16.1 (via WD domain) and atg-16.2 (via WD 5-6 repeats); the interactions are direct. Interacts with sepa-1 (via the LIR motifs); the interaction is direct. Interacts with sqst-1 (via the LIR motifs); the interaction is direct. Interacts with epg-2 (via the LIR motifs); the interaction is weak. Interacts with atg-7; the interaction is direct. Interacts with atg-3. The interaction with atg-7 and atg-3 may be required for the lipidation of lgg-2. Post-translationally, this protein is subject to lipidation. Lipidation is regulated by lgg-1.

It is found in the cytoplasmic vesicle. The protein resides in the autophagosome. Its subcellular location is the cytoplasm. The protein localises to the cell membrane. In terms of biological role, ubiquitin-like modifier involved in the formation of autophagosomal vacuoles (autophagosomes). When lipidated mediates tethering between adjacent membranes and stimulates membrane fusion. Less effective at promoting membrane fusion than lgg-1. Acts upstream of the autophagy protein epg-5 in the aggrephagy pathway, which is the macroautophagic degradation of ubiquitinated protein aggregates, and preferentially interacts with autophagy proteins and substrates containing LIR motifs to mediate autophagosome formation and protein aggregate degradation. In particular binds to components of an atg-5-lgg-3-atg-16 complex to regulate autophagosome formation and cargo sequestration. Required for the degradation of specific sqst-1-containing aggregates during embryogenesis and the early stages of larval development. Involved in allophagy, which is an autophagic process in which paternal mitochondria and organelles are degraded during fertilization, and moreover is required for the degradation of lgg-1-positive allophagic autophagosomes in embryos. Involved in xenophagy, the autophagy-mediated degradation of pathogens and pathogen products, such as toxins. Also plays a role in membrane-pore repair. Through HOPS complex subunit vps-39, tethers lysosomes with autophagosomes to form autolysosomes. Plays a role in the distribution and clearance of germ cell specific P-granules from somatic cells to ensure exclusive localization of the P-granules in germ cells. Essential for dauer development and life-span extension. The chain is Protein lgg-2 from Caenorhabditis elegans.